A 147-amino-acid polypeptide reads, in one-letter code: Hemoglobin subunit epsilon (147 aa).

Residues 3–147 (HFTAEEKAAV…VAIALAHKYH (145 aa)) enclose the Globin domain. A phosphoserine mark is found at Ser14 and Ser51. Residues His64 and His93 each contribute to the heme b site.

Belongs to the globin family. In terms of assembly, heterotetramer of two alpha chains and two epsilon chains in early embryonic hemoglobin Gower-2; two zeta chains and two epsilon chains in early embryonic hemoglobin Gower-1. As to expression, red blood cells.

In terms of biological role, the epsilon chain is a beta-type chain of early mammalian embryonic hemoglobin. In Symphalangus syndactylus (Siamang), this protein is Hemoglobin subunit epsilon (HBE1).